The chain runs to 191 residues: COP9 signalosome complex subunit 8 (191 aa).

The PCI domain occupies 6 to 179 (MMAELDEKLL…VSLVPNEQQL (174 aa)).

The protein belongs to the CSN8 family. As to quaternary structure, component of the CSN complex, probably composed of cops1, cops2, cops3, cops4, cops5, cops6, cops7, cops8 and cops9.

The protein resides in the cytoplasm. The protein localises to the nucleus. Functionally, component of the COP9 signalosome complex (CSN), a complex involved in various cellular and developmental processes. The CSN complex is an essential regulator of the ubiquitin (Ubl) conjugation pathway by mediating the deneddylation of the cullin subunits of E3 ligase complexes, leading to modify the Ubl ligase activity. This Danio rerio (Zebrafish) protein is COP9 signalosome complex subunit 8 (cops8).